The primary structure comprises 182 residues: Dihydrofolate reductase (182 aa).

A DHFR domain is found at 3–180; the sequence is RFNLIVAVCE…IKFEYKILEK (178 aa). Residues alanine 9 and 15-21 contribute to the NADP(+) site; that span reads GIGIRGD. 29–34 provides a ligand contact to substrate; that stretch reads ELKYFS. Residue 53-55 participates in NADP(+) binding; the sequence is RKT. Arginine 69 lines the substrate pocket. Residues 75–77 and 113–120 each bind NADP(+); these read STT and GGSGVYEE.

The protein belongs to the dihydrofolate reductase family. As to quaternary structure, monomer. Interacts with vg.

It catalyses the reaction (6S)-5,6,7,8-tetrahydrofolate + NADP(+) = 7,8-dihydrofolate + NADPH + H(+). It functions in the pathway cofactor biosynthesis; tetrahydrofolate biosynthesis; 5,6,7,8-tetrahydrofolate from 7,8-dihydrofolate: step 1/1. By interacting with vestigial (vg), may control genes involved in DNA replication. Its function is as follows. Key enzyme in folate metabolism. Catalyzes an essential reaction for de novo glycine and purine synthesis, and for DNA precursor synthesis. The chain is Dihydrofolate reductase (Dhfr) from Drosophila melanogaster (Fruit fly).